The sequence spans 65 residues: VRDGYIVDDKNCVYHCIPPCDGLCKKNGGKSGSCSFLVPSGLACWCKALPDNVPIKDPSYKCHKR.

Positions 2–63 constitute an LCN-type CS-alpha/beta domain; sequence RDGYIVDDKN…PIKDPSYKCH (62 aa). 4 disulfide bridges follow: Cys12–Cys62, Cys16–Cys34, Cys20–Cys44, and Cys24–Cys46. Arg65 is a propeptide (removed by a carboxypeptidase).

The protein belongs to the long (4 C-C) scorpion toxin superfamily. Sodium channel inhibitor family. Alpha subfamily. As to expression, expressed by the venom gland.

The protein resides in the secreted. Functionally, alpha toxins bind voltage-independently at site-3 of sodium channels (Nav) and inhibit the inactivation of the activated channels, thereby blocking neuronal transmission. Electrophysiological studies of this were performed using sodium-channels expressed in F11 cell culture, by patch-clamp recordings. Affinity of this toxin toward sodium channels in F11 cell line is in the order of 1 uM concentration. This Androctonus crassicauda (Arabian fat-tailed scorpion) protein is Sodium channel alpha-toxin Acra4.